The sequence spans 251 residues: Pyrroloquinoline-quinone synthase (251 aa).

This sequence belongs to the PqqC family.

It carries out the reaction 6-(2-amino-2-carboxyethyl)-7,8-dioxo-1,2,3,4,7,8-hexahydroquinoline-2,4-dicarboxylate + 3 O2 = pyrroloquinoline quinone + 2 H2O2 + 2 H2O + H(+). It participates in cofactor biosynthesis; pyrroloquinoline quinone biosynthesis. Ring cyclization and eight-electron oxidation of 3a-(2-amino-2-carboxyethyl)-4,5-dioxo-4,5,6,7,8,9-hexahydroquinoline-7,9-dicarboxylic-acid to PQQ. This chain is Pyrroloquinoline-quinone synthase, found in Pseudomonas putida (strain W619).